We begin with the raw amino-acid sequence, 307 residues long: uncharacterized protein (307 aa).

The first 25 residues, 1–25 (MKFQKRNIQLVLILLLILNNCFINS), serve as a signal peptide directing secretion. A disordered region spans residues 60–90 (ENNNKNNNNNNNNNNNNNNNNKNSKVKNDDS). Residues 63-82 (NKNNNNNNNNNNNNNNNNKN) are compositionally biased toward low complexity. N-linked (GlcNAc...) asparagine glycosylation is found at Asn124 and Asn173. The next 2 membrane-spanning stretches (helical) occupy residues 244–264 (IIFA…YYLA) and 275–295 (IIGV…TIVI).

It localises to the membrane. This is an uncharacterized protein from Dictyostelium discoideum (Social amoeba).